We begin with the raw amino-acid sequence, 192 residues long: Glycerol-3-phosphate acyltransferase (192 aa).

A run of 5 helical transmembrane segments spans residues 1 to 21 (MFIA…AYIL), 49 to 69 (GLAG…IYSL), 80 to 100 (ELCI…WLKF), 110 to 130 (IGVI…SWLF), and 143 to 163 (IVSI…VVAL).

Belongs to the PlsY family. In terms of assembly, probably interacts with PlsX.

The protein localises to the cell inner membrane. It carries out the reaction an acyl phosphate + sn-glycerol 3-phosphate = a 1-acyl-sn-glycero-3-phosphate + phosphate. The protein operates within lipid metabolism; phospholipid metabolism. Catalyzes the transfer of an acyl group from acyl-phosphate (acyl-PO(4)) to glycerol-3-phosphate (G3P) to form lysophosphatidic acid (LPA). This enzyme utilizes acyl-phosphate as fatty acyl donor, but not acyl-CoA or acyl-ACP. This chain is Glycerol-3-phosphate acyltransferase, found in Anaplasma phagocytophilum (strain HZ).